Consider the following 326-residue polypeptide: Mitochondrial substrate carrier family protein R (326 aa).

Solcar repeat units lie at residues T9 to N95, K101 to I214, and V226 to Y318. 6 helical membrane-spanning segments follow: residues M12–L32, L64–I84, V104–L124, G185–Y205, V226–A246, and L290–L310.

The protein belongs to the mitochondrial carrier (TC 2.A.29) family.

It is found in the mitochondrion inner membrane. Functionally, mitochondrial solute carriers shuttle metabolites, nucleotides, and cofactors through the mitochondrial inner membrane. May be involved in the accumulation of coenzyme A in the mitochondrial matrix. In Dictyostelium discoideum (Social amoeba), this protein is Mitochondrial substrate carrier family protein R (mcfR).